The primary structure comprises 488 residues: Germacrene A hydroxylase (488 aa).

Residues 7-23 (TSIALATILFFVYKFAT) traverse the membrane as a helical; Signal-anchor for type II membrane protein segment. Residues asparagine 169, asparagine 260, asparagine 379, and asparagine 410 are each glycosylated (N-linked (GlcNAc...) asparagine). Cysteine 432 contributes to the heme binding site.

This sequence belongs to the cytochrome P450 family. Expressed in floral glandular trichomes.

Its subcellular location is the endoplasmic reticulum membrane. The enzyme catalyses (+)-(R)-germacrene A + 3 reduced [NADPH--hemoprotein reductase] + 3 O2 = germacra-1(10),4,11(13)-trien-12-oate + 3 oxidized [NADPH--hemoprotein reductase] + 4 H2O + 4 H(+). The protein operates within secondary metabolite biosynthesis; terpenoid biosynthesis. Its function is as follows. Involved in the biosynthesis of germacrene-derived sesquiterpene lactones. Component of the parthenolide biosynthetic pathway; parthenolide and conjugates are promising anti-cancer drugs highly active against colon cancer cells. Catalyzes three consecutive oxidations of germacrene A to produce germacrene A acid. The protein is Germacrene A hydroxylase of Tanacetum parthenium (Feverfew).